Reading from the N-terminus, the 387-residue chain is Galactokinase (387 aa).

A substrate-binding site is contributed by 32 to 35 (EHTD). ATP contacts are provided by residues S66 and 123–129 (GAGLSSS). S129 and E161 together coordinate Mg(2+). D173 functions as the Proton acceptor in the catalytic mechanism. Y223 contributes to the substrate binding site.

It belongs to the GHMP kinase family. GalK subfamily.

Its subcellular location is the cytoplasm. It catalyses the reaction alpha-D-galactose + ATP = alpha-D-galactose 1-phosphate + ADP + H(+). Its pathway is carbohydrate metabolism; galactose metabolism. Its function is as follows. Catalyzes the transfer of the gamma-phosphate of ATP to D-galactose to form alpha-D-galactose-1-phosphate (Gal-1-P). The chain is Galactokinase from Enterococcus faecalis (strain ATCC 700802 / V583).